A 286-amino-acid polypeptide reads, in one-letter code: tRNA (guanine-N(7)-)-methyltransferase (286 aa).

The interval 1–21 (MTNPESTAIDPVAAMGTDHTE) is disordered. S-adenosyl-L-methionine-binding residues include Glu-91, Glu-116, Asn-143, and Asp-165. Asp-165 is an active-site residue. Substrate-binding positions include Lys-169, Asp-201, and 262–265 (TNFE).

Belongs to the class I-like SAM-binding methyltransferase superfamily. TrmB family.

It carries out the reaction guanosine(46) in tRNA + S-adenosyl-L-methionine = N(7)-methylguanosine(46) in tRNA + S-adenosyl-L-homocysteine. The protein operates within tRNA modification; N(7)-methylguanine-tRNA biosynthesis. Functionally, catalyzes the formation of N(7)-methylguanine at position 46 (m7G46) in tRNA. The protein is tRNA (guanine-N(7)-)-methyltransferase of Bifidobacterium longum (strain NCC 2705).